The following is a 226-amino-acid chain: Orotate phosphoribosyltransferase (226 aa).

5-phospho-alpha-D-ribose 1-diphosphate-binding positions include R107, K108, K111, and 133-141 (EDLTTDGGS). T137 is an orotate binding site.

It belongs to the purine/pyrimidine phosphoribosyltransferase family. PyrE subfamily. Homodimer. Mg(2+) is required as a cofactor.

The catalysed reaction is orotidine 5'-phosphate + diphosphate = orotate + 5-phospho-alpha-D-ribose 1-diphosphate. The protein operates within pyrimidine metabolism; UMP biosynthesis via de novo pathway; UMP from orotate: step 1/2. Functionally, catalyzes the transfer of a ribosyl phosphate group from 5-phosphoribose 1-diphosphate to orotate, leading to the formation of orotidine monophosphate (OMP). The sequence is that of Orotate phosphoribosyltransferase from Ruegeria sp. (strain TM1040) (Silicibacter sp.).